Consider the following 180-residue polypeptide: E3 ubiquitin-protein ligase RNF5 (180 aa).

A2 is subject to N-acetylalanine. The segment at 27 to 68 (CNICLETAREAVVSVCGHLYCWPCLHQWLETRPERQECPVCK) adopts an RING-type zinc-finger fold. The interval 79 to 110 (LYGRGSQKPQDPRLKTPPRPQGQRPAPESRGG) is disordered. The residue at position 84 (S84) is a Phosphoserine. T94 bears the Phosphothreonine mark. S107 bears the Phosphoserine mark. 2 helical membrane passes run 118–138 (GGFH…TTVF) and 160–180 (SWQD…LLSI).

This sequence belongs to the RNF5 family. Interacts with PXN. Interacts with Salmonella typhimurium sopA. Interacts with JKAMP. Interacts with STING1; the interaction of endogenous proteins is dependent on viral infection. Widely expressed.

It is found in the cell membrane. Its subcellular location is the mitochondrion membrane. The protein resides in the endoplasmic reticulum membrane. It catalyses the reaction S-ubiquitinyl-[E2 ubiquitin-conjugating enzyme]-L-cysteine + [acceptor protein]-L-lysine = [E2 ubiquitin-conjugating enzyme]-L-cysteine + N(6)-ubiquitinyl-[acceptor protein]-L-lysine.. It participates in protein modification; protein ubiquitination. Its function is as follows. Membrane-bound E3 ubiquitin-protein ligase that mediates ubiquitination of target proteins. May function together with E2 ubiquitin-conjugating enzymes UBE2D1/UBCH5A and UBE2D2/UBC4. Mediates ubiquitination of PXN/paxillin,thereby regulating cell motility and localization of PXN/paxillin. Catalyzes ubiquitination of Salmonella type III secreted protein sopA. Mediates the 'Lys-63'-linked polyubiquitination of JKAMP thereby regulating JKAMP function by decreasing its association with components of the proteasome and ERAD; the ubiquitination appears to involve E2 ubiquitin-conjugating enzyme UBE2N. Mediates the 'Lys-48'-linked polyubiquitination of STING1 at 'Lys-150' leading to its proteasomal degradation; the ubiquitination occurs in mitochondria after viral transfection and regulates antiviral responses. Catalyzes ubiquitination and subsequent degradation of ATG4B, thereby inhibiting autophagy. This is E3 ubiquitin-protein ligase RNF5 from Homo sapiens (Human).